Reading from the N-terminus, the 89-residue chain is Small ribosomal subunit protein uS17 (89 aa).

This sequence belongs to the universal ribosomal protein uS17 family. As to quaternary structure, part of the 30S ribosomal subunit.

Functionally, one of the primary rRNA binding proteins, it binds specifically to the 5'-end of 16S ribosomal RNA. The protein is Small ribosomal subunit protein uS17 of Polaromonas naphthalenivorans (strain CJ2).